The sequence spans 247 residues: Isoprenyl transferase (247 aa).

Asp-18 is a catalytic residue. Residue Asp-18 participates in Mg(2+) binding. Substrate is bound by residues 19–22 (GNGR), Trp-23, Arg-31, His-35, and 63–65 (SSE). Residue Asn-66 is the Proton acceptor of the active site. Substrate contacts are provided by residues Trp-67, Arg-69, Arg-186, and 192–194 (RLS). Residue Glu-205 participates in Mg(2+) binding.

This sequence belongs to the UPP synthase family. As to quaternary structure, homodimer. Mg(2+) serves as cofactor.

In terms of biological role, catalyzes the condensation of isopentenyl diphosphate (IPP) with allylic pyrophosphates generating different type of terpenoids. This chain is Isoprenyl transferase, found in Agrobacterium fabrum (strain C58 / ATCC 33970) (Agrobacterium tumefaciens (strain C58)).